A 601-amino-acid chain; its full sequence is Invasin CotH3 (601 aa).

A signal peptide spans 1 to 17 (MKLSIISAAFLVAITHA). Residues asparagine 28, asparagine 85, asparagine 170, asparagine 324, asparagine 449, asparagine 527, asparagine 541, asparagine 554, asparagine 561, and asparagine 571 are each glycosylated (N-linked (GlcNAc...) asparagine). Residues 539-579 (SANGTTAAAPAPAAGNSTGKGGNQSISSSASSNKTSAQSTS) are compositionally biased toward low complexity. A disordered region spans residues 539–581 (SANGTTAAAPAPAAGNSTGKGGNQSISSSASSNKTSAQSTSGA). The GPI-anchor amidated serine moiety is linked to residue serine 579. A propeptide spans 580 to 601 (GASRSKTAPIVLAISALALLVF) (removed in mature form).

In terms of assembly, interacts with HSPA5/BiP on the cell surface of host nasal epithelial cells.

It localises to the cell membrane. In terms of biological role, promotes invasion of host epithelial cells by adhering to receptors on the host cell surface to facilitate endocytosis of the pathogen into host cells. Binds HSPA5/BiP protein on the cell surface of host nasal epithelial cells. This is Invasin CotH3 from Rhizopus delemar (strain RA 99-880 / ATCC MYA-4621 / FGSC 9543 / NRRL 43880) (Mucormycosis agent).